Here is a 123-residue protein sequence, read N- to C-terminus: Small ribosomal subunit protein uS12 (123 aa).

Positions 1–22 (MATINQLVRKPRKRKAKTSDVR) are disordered. Aspartate 89 is subject to 3-methylthioaspartic acid. The segment at 101–123 (ALDTSGVNDRKRGRSKYGTKRPK) is disordered. The segment covering 111–123 (KRGRSKYGTKRPK) has biased composition (basic residues).

This sequence belongs to the universal ribosomal protein uS12 family. Part of the 30S ribosomal subunit. Contacts proteins S8 and S17. May interact with IF1 in the 30S initiation complex.

With S4 and S5 plays an important role in translational accuracy. Functionally, interacts with and stabilizes bases of the 16S rRNA that are involved in tRNA selection in the A site and with the mRNA backbone. Located at the interface of the 30S and 50S subunits, it traverses the body of the 30S subunit contacting proteins on the other side and probably holding the rRNA structure together. The combined cluster of proteins S8, S12 and S17 appears to hold together the shoulder and platform of the 30S subunit. The protein is Small ribosomal subunit protein uS12 of Teredinibacter turnerae (strain ATCC 39867 / T7901).